Consider the following 185-residue polypeptide: Ribosome-recycling factor (185 aa).

Positions 138-159 are disordered; the sequence is KVKKLEKDKEISEDESKKAQEQ.

This sequence belongs to the RRF family.

The protein localises to the cytoplasm. Functionally, responsible for the release of ribosomes from messenger RNA at the termination of protein biosynthesis. May increase the efficiency of translation by recycling ribosomes from one round of translation to another. In Helicobacter acinonychis (strain Sheeba), this protein is Ribosome-recycling factor.